The primary structure comprises 443 residues: Phosphoribosylamine--glycine ligase (443 aa).

Residues 109–324 enclose the ATP-grasp domain; it reads RNLFKKYNIK…FLDVCFGISN (216 aa). Residue 140–202 participates in ATP binding; the sequence is MTGLGKDVVV…EEKLVGVEFT (63 aa). Mg(2+) is bound by residues Gln282, Glu294, and Asn296. Residues Gln282, Glu294, and Asn296 each coordinate Mn(2+).

This sequence belongs to the GARS family. Requires Mg(2+) as cofactor. Mn(2+) is required as a cofactor.

The catalysed reaction is 5-phospho-beta-D-ribosylamine + glycine + ATP = N(1)-(5-phospho-beta-D-ribosyl)glycinamide + ADP + phosphate + H(+). It functions in the pathway purine metabolism; IMP biosynthesis via de novo pathway; N(1)-(5-phospho-D-ribosyl)glycinamide from 5-phospho-alpha-D-ribose 1-diphosphate: step 2/2. This is Phosphoribosylamine--glycine ligase from Methanococcus vannielii (strain ATCC 35089 / DSM 1224 / JCM 13029 / OCM 148 / SB).